We begin with the raw amino-acid sequence, 213 residues long: RxLR effector protein PexRD1 (213 aa).

The N-terminal stretch at 1–19 (MRACNTLLPTAIVLTSCDA) is a signal peptide. The RxLR-dEER signature appears at 50–77 (RQLRGFYATENTDPVNNQDTAHEDGEER).

This sequence belongs to the RxLR effector family.

It localises to the secreted. It is found in the host nucleus. Its function is as follows. Effector that enhances P.infestans colonization of Nicotiana benthamiana leaves. The polypeptide is RxLR effector protein PexRD1 (Phytophthora infestans (strain T30-4) (Potato late blight agent)).